The sequence spans 213 residues: Glycerol-3-phosphate acyltransferase (213 aa).

A run of 5 helical transmembrane segments spans residues 3–23 (ILLA…VVVS), 51–71 (KAAI…VWLA), 78–98 (DVAV…PVFF), 115–135 (AVHP…AFFF), and 140–160 (LAAL…FGTP).

This sequence belongs to the PlsY family. Probably interacts with PlsX.

Its subcellular location is the cell inner membrane. It catalyses the reaction an acyl phosphate + sn-glycerol 3-phosphate = a 1-acyl-sn-glycero-3-phosphate + phosphate. Its pathway is lipid metabolism; phospholipid metabolism. Functionally, catalyzes the transfer of an acyl group from acyl-phosphate (acyl-PO(4)) to glycerol-3-phosphate (G3P) to form lysophosphatidic acid (LPA). This enzyme utilizes acyl-phosphate as fatty acyl donor, but not acyl-CoA or acyl-ACP. The sequence is that of Glycerol-3-phosphate acyltransferase from Burkholderia cenocepacia (strain ATCC BAA-245 / DSM 16553 / LMG 16656 / NCTC 13227 / J2315 / CF5610) (Burkholderia cepacia (strain J2315)).